Reading from the N-terminus, the 251-residue chain is Triosephosphate isomerase (251 aa).

Position 9-11 (asparagine 9–lysine 11) interacts with substrate. The active-site Electrophile is the histidine 96. Glutamate 167 (proton acceptor) is an active-site residue. Residues glycine 173, serine 213, and glycine 234–glycine 235 contribute to the substrate site.

Belongs to the triosephosphate isomerase family. As to quaternary structure, homodimer.

It is found in the cytoplasm. The enzyme catalyses D-glyceraldehyde 3-phosphate = dihydroxyacetone phosphate. Its pathway is carbohydrate biosynthesis; gluconeogenesis. It participates in carbohydrate degradation; glycolysis; D-glyceraldehyde 3-phosphate from glycerone phosphate: step 1/1. Its function is as follows. Involved in the gluconeogenesis. Catalyzes stereospecifically the conversion of dihydroxyacetone phosphate (DHAP) to D-glyceraldehyde-3-phosphate (G3P). This is Triosephosphate isomerase from Phocaeicola vulgatus (strain ATCC 8482 / DSM 1447 / JCM 5826 / CCUG 4940 / NBRC 14291 / NCTC 11154) (Bacteroides vulgatus).